Consider the following 124-residue polypeptide: Large ribosomal subunit protein bL20c (124 aa).

It belongs to the bacterial ribosomal protein bL20 family.

It is found in the plastid. The protein resides in the chloroplast. Its function is as follows. Binds directly to 23S ribosomal RNA and is necessary for the in vitro assembly process of the 50S ribosomal subunit. It is not involved in the protein synthesizing functions of that subunit. In Stigeoclonium helveticum (Green alga), this protein is Large ribosomal subunit protein bL20c.